Consider the following 406-residue polypeptide: MIPIDPWIILTLILGFGMAWAIGANDAANSMSTAVGAGAITPKQAVLIAGVLEFTGAYFFGKTVTETIRKGIIDPSKISDPNVLIYGSIAALLGATIWLIIATKYGLPVSTTHSIIGGIVGYGIIYGGIGIVNWDKMVRVVLSWVLSPIVGAIFAFLVFRALRRTVLQSEDPVKSAKRWSPFWIGLAFIVIGTMFYIKVLHGSSLYIGILKYGIPTGIIVFIITSMLLRVKFPNVDPYLGAEVIFRKVQVITSGYVALAHGANDVANAIGPVAAVYTIATMGLAGAKVPVPRWILALGGLGIAIGVATYGYRVMETVGKKITELTNTRGFTIDFSAATVVLIASWLGMPISTTHTVVGAVIGVGLARGVKAINKSVVKDIIISWFVTVPVAGIIAGIIFKVLLLIG.

11 helical membrane passes run 2–22 (IPIDPWIILTLILGFGMAWAI), 45–65 (AVLIAGVLEFTGAYFFGKTVT), 83–103 (VLIYGSIAALLGATIWLIIAT), 114–134 (SIIGGIVGYGIIYGGIGIVNW), 140–160 (VVLSWVLSPIVGAIFAFLVFR), 182–202 (FWIGLAFIVIGTMFYIKVLHG), 207–227 (IGILKYGIPTGIIVFIITSML), 265–285 (VANAIGPVAAVYTIATMGLAG), 288–308 (VPVPRWILALGGLGIAIGVAT), 330–350 (FTIDFSAATVVLIASWLGMPI), and 385–405 (FVTVPVAGIIAGIIFKVLLLI).

This sequence belongs to the inorganic phosphate transporter (PiT) (TC 2.A.20) family.

It is found in the cell membrane. Its function is as follows. Potential transporter for phosphate. This is Putative phosphate permease PH0640 from Pyrococcus horikoshii (strain ATCC 700860 / DSM 12428 / JCM 9974 / NBRC 100139 / OT-3).